Consider the following 171-residue polypeptide: Tetratricopeptide repeat protein 9C (171 aa).

TPR repeat units lie at residues 8-41, 72-107, and 108-141; these read AQLYKEEGNQRYREGKYRDAVSRYHRALLQLRGL, TDCYNNLAACLLQMEPVKYERVREYSQKVLERQPEN, and AKALYRAGVAFFHLQDYDQARHYLLAAVNRQPKD.

Belongs to the TTC9 family.

The sequence is that of Tetratricopeptide repeat protein 9C (Ttc9c) from Rattus norvegicus (Rat).